The chain runs to 193 residues: dTTP/UTP pyrophosphatase (193 aa).

Aspartate 75 functions as the Proton acceptor in the catalytic mechanism.

This sequence belongs to the Maf family. YhdE subfamily. A divalent metal cation serves as cofactor.

Its subcellular location is the cytoplasm. It catalyses the reaction dTTP + H2O = dTMP + diphosphate + H(+). It carries out the reaction UTP + H2O = UMP + diphosphate + H(+). Nucleoside triphosphate pyrophosphatase that hydrolyzes dTTP and UTP. May have a dual role in cell division arrest and in preventing the incorporation of modified nucleotides into cellular nucleic acids. The chain is dTTP/UTP pyrophosphatase from Chlorobium phaeovibrioides (strain DSM 265 / 1930) (Prosthecochloris vibrioformis (strain DSM 265)).